The primary structure comprises 147 residues: uncharacterized protein (147 aa).

The 91-residue stretch at 50-140 folds into the Rhodanese domain; sequence NQKKAIIVDT…WNSENLPTTF (91 aa).

This is an uncharacterized protein from Buchnera aphidicola subsp. Schizaphis graminum (strain Sg).